The sequence spans 673 residues: UPF0313 protein blr7973 (673 aa).

The Radical SAM core domain maps to A332–D611. Residues C346, C350, and C353 each coordinate [4Fe-4S] cluster. Positions R632 to K673 are disordered.

The protein belongs to the UPF0313 family. [4Fe-4S] cluster serves as cofactor.

The polypeptide is UPF0313 protein blr7973 (Bradyrhizobium diazoefficiens (strain JCM 10833 / BCRC 13528 / IAM 13628 / NBRC 14792 / USDA 110)).